A 152-amino-acid chain; its full sequence is Transcription elongation factor Spt5 (152 aa).

The 31-residue stretch at 99 to 129 folds into the KOW domain; sequence EGDLVEVISGPFRGMQAQVVRVESTKNEVVL.

This sequence belongs to the archaeal Spt5 family. Heterodimer composed of Spt4 and Spt5. Interacts with RNA polymerase (RNAP).

In terms of biological role, stimulates transcription elongation. This chain is Transcription elongation factor Spt5, found in Sulfolobus acidocaldarius (strain ATCC 33909 / DSM 639 / JCM 8929 / NBRC 15157 / NCIMB 11770).